Consider the following 506-residue polypeptide: COP9 signalosome complex subunit 2 (506 aa).

In terms of domain architecture, PCI spans 252–420 (SEENWEEAQS…GTVVVESASD (169 aa)). The span at 482–491 (SGHRFRRGGK) shows a compositional bias: basic residues. The disordered stretch occupies residues 482–506 (SGHRFRRGGKGSKAGGGLGMKTGLF). Over residues 492-506 (GSKAGGGLGMKTGLF) the composition is skewed to gly residues.

Belongs to the CSN2 family. In terms of assembly, component of the COP9 signalosome (CSN) complex.

The protein localises to the cytoplasm. It is found in the nucleus. Component of the COP9 signalosome (CSN) complex that acts as an regulator of the ubiquitin (Ubl) conjugation pathway by mediating the deneddylation of the cullin subunit of SCF-type E3 ubiquitin-protein ligase complexes. The CSN complex seems to link protein degradation to sexual development. Required for fruit body formation. The chain is COP9 signalosome complex subunit 2 (csnB) from Emericella nidulans (strain FGSC A4 / ATCC 38163 / CBS 112.46 / NRRL 194 / M139) (Aspergillus nidulans).